The following is a 127-amino-acid chain: Small ribosomal subunit protein uS12 (127 aa).

3-methylthioaspartic acid is present on Asp89.

It belongs to the universal ribosomal protein uS12 family. As to quaternary structure, part of the 30S ribosomal subunit. Contacts proteins S8 and S17. May interact with IF1 in the 30S initiation complex.

In terms of biological role, with S4 and S5 plays an important role in translational accuracy. Interacts with and stabilizes bases of the 16S rRNA that are involved in tRNA selection in the A site and with the mRNA backbone. Located at the interface of the 30S and 50S subunits, it traverses the body of the 30S subunit contacting proteins on the other side and probably holding the rRNA structure together. The combined cluster of proteins S8, S12 and S17 appears to hold together the shoulder and platform of the 30S subunit. This chain is Small ribosomal subunit protein uS12, found in Akkermansia muciniphila (strain ATCC BAA-835 / DSM 22959 / JCM 33894 / BCRC 81048 / CCUG 64013 / CIP 107961 / Muc).